The following is a 634-amino-acid chain: Leucine--tRNA ligase subunit alpha (634 aa).

Positions 43–51 match the 'HIGH' region motif; it reads PSGRIHMGH.

Belongs to the class-I aminoacyl-tRNA synthetase family. As to quaternary structure, seems to consist of an alpha chain and a beta chain.

Its subcellular location is the cytoplasm. It catalyses the reaction tRNA(Leu) + L-leucine + ATP = L-leucyl-tRNA(Leu) + AMP + diphosphate. The polypeptide is Leucine--tRNA ligase subunit alpha (leuS) (Aquifex aeolicus (strain VF5)).